A 948-amino-acid polypeptide reads, in one-letter code: Protein translocase subunit SecA (948 aa).

ATP-binding positions include Gln-91, 109 to 113, and Asp-509; that span reads GEGKT.

Belongs to the SecA family. As to quaternary structure, monomer and homodimer. Part of the essential Sec protein translocation apparatus which comprises SecA, SecYEG and auxiliary proteins SecDF. Other proteins may also be involved.

The protein localises to the cell inner membrane. It is found in the cellular thylakoid membrane. The protein resides in the cytoplasm. The catalysed reaction is ATP + H2O + cellular proteinSide 1 = ADP + phosphate + cellular proteinSide 2.. In terms of biological role, part of the Sec protein translocase complex. Interacts with the SecYEG preprotein conducting channel. Has a central role in coupling the hydrolysis of ATP to the transfer of proteins into and across the cell membrane, serving as an ATP-driven molecular motor driving the stepwise translocation of polypeptide chains across the membrane. Its function is as follows. Probably participates in protein translocation into and across both the cytoplasmic and thylakoid membranes in cyanobacterial cells. The sequence is that of Protein translocase subunit SecA from Synechococcus elongatus (strain ATCC 33912 / PCC 7942 / FACHB-805) (Anacystis nidulans R2).